Consider the following 63-residue polypeptide: Cecropin-B (63 aa).

A signal peptide spans 1–22; the sequence is MNFAKILSFVFALVLALSMTSA. Residues 23–26 constitute a propeptide, removed by a dipeptidylpeptidase; the sequence is APEP. Lysine 47 is subject to 5-hydroxylysine; partial. At isoleucine 61 the chain carries Isoleucine amide.

This sequence belongs to the cecropin family. Post-translationally, lepidopteran-B differs from lepidopteran-A by its hydroxylated residue. Highest expression in fat body and hemocytes. Is also expressed in Malpighian tubules and to a much lesser extent in midgut. Not present in silk gland.

The protein resides in the secreted. In terms of biological role, cecropins have lytic and antibacterial activity against several Gram-positive and Gram-negative bacteria. The protein is Cecropin-B (CECB1) of Bombyx mori (Silk moth).